The chain runs to 71 residues: Exodeoxyribonuclease 7 small subunit (71 aa).

Belongs to the XseB family. As to quaternary structure, heterooligomer composed of large and small subunits.

The protein resides in the cytoplasm. It catalyses the reaction Exonucleolytic cleavage in either 5'- to 3'- or 3'- to 5'-direction to yield nucleoside 5'-phosphates.. Functionally, bidirectionally degrades single-stranded DNA into large acid-insoluble oligonucleotides, which are then degraded further into small acid-soluble oligonucleotides. This Clostridium botulinum (strain Loch Maree / Type A3) protein is Exodeoxyribonuclease 7 small subunit.